Consider the following 334-residue polypeptide: Protein SCO1 homolog 1, mitochondrial (334 aa).

A mitochondrion-targeting transit peptide spans 1-13 (MASALCRTASRLR). The segment at 74 to 120 (SASDTTSKHDSGKPETKSSEKNEKSGGSESSDGGSDHKNERASGKDV) is disordered. 2 stretches are compositionally biased toward basic and acidic residues: residues 79 to 99 (TSKH…EKSG) and 107 to 120 (GSDH…GKDV). The chain crosses the membrane as a helical span at residues 125–144 (VSWMSFFLLFATGAGLVYYY). The Thioredoxin domain occupies 166 to 331 (PSAGKAAIGG…TDGVVKEIRQ (166 aa)). Residues cysteine 206, cysteine 210, and histidine 295 each coordinate Cu cation.

It belongs to the SCO1/2 family. Expressed in the whole plant with highest expression in imbibed seeds, embryos, endosperm, and root tips.

It is found in the mitochondrion inner membrane. In terms of biological role, thought to play a role in cellular copper homeostasis, mitochondrial redox signaling or insertion of copper into the active site of COX. Plays an essential role in embryo development. This chain is Protein SCO1 homolog 1, mitochondrial (HCC1), found in Arabidopsis thaliana (Mouse-ear cress).